The following is a 125-amino-acid chain: Evasin P672 (125 aa).

A signal peptide spans 1 to 21 (MAHKIAIGLVCVLYALHIMSA). Residues N35, N55, N65, N72, N78, N104, N112, and N118 are each glycosylated (N-linked (GlcNAc...) asparagine). Intrachain disulfides connect C70-C110, C87-C115, and C105-C124.

It localises to the secreted. Salivary chemokine-binding protein which has chemokine-neutralizing activity and binds to host chemokines CCL1, CCL2, CCL3, CCL3L1, CCL7, CCL8, CCL11, CCL12, CCL13, CCL14, CCL15, CCL16, CCL18 and CCL23. Binds to CCL8 with 1:1 stoichiometry and disrupts CCL8 homodimer formation. The sequence is that of Evasin P672 from Rhipicephalus pulchellus (Yellow backed tick).